The chain runs to 388 residues: 2-methylene-furan-3-one reductase (388 aa).

A chloroplast-targeting transit peptide spans 1–60; the sequence is MEALLSSTTLQLKPLHPPSSFSSLHSPFSSISVLRVKGSKKAETFIQRSNFSTVLPLRVS. Residues Lys-125, 240–241, 263–266, Tyr-281, 330–332, and 377–378 each bind NADP(+); these read GV, STGK, FVV, and RA. Position 125 (Lys-125) interacts with substrate.

Belongs to the zinc-containing alcohol dehydrogenase family. Quinone oxidoreductase subfamily. As to quaternary structure, monomer.

The protein resides in the plastid. It localises to the chloroplast. It carries out the reaction 4-hydroxy-2,5-dimethyl-furan-3(2H)-one + NADP(+) = 4-hydroxy-5-methyl-2-methylenefuran-3(2H)-one + NADPH + H(+). Enone oxidoreductase involved in the biosynthesis of 4-hydroxy-2,5-dimethyl-3(2H)-furanone (HDMF or furaneol). Can use both NADH and NADPH as the electron donor. This chain is 2-methylene-furan-3-one reductase (EO), found in Solanum lycopersicum (Tomato).